An 827-amino-acid polypeptide reads, in one-letter code: Lon protease (827 aa).

In terms of domain architecture, Lon N-terminal spans L38 to L233. Residue G384–T391 coordinates ATP. Positions T619–P800 constitute a Lon proteolytic domain. Active-site residues include S706 and K749.

It belongs to the peptidase S16 family. Homohexamer. Organized in a ring with a central cavity.

The protein resides in the cytoplasm. The enzyme catalyses Hydrolysis of proteins in presence of ATP.. In terms of biological role, ATP-dependent serine protease that mediates the selective degradation of mutant and abnormal proteins as well as certain short-lived regulatory proteins. Required for cellular homeostasis and for survival from DNA damage and developmental changes induced by stress. Degrades polypeptides processively to yield small peptide fragments that are 5 to 10 amino acids long. Binds to DNA in a double-stranded, site-specific manner. This chain is Lon protease, found in Amoebophilus asiaticus (strain 5a2).